The following is a 1921-amino-acid chain: Disks large homolog 5 (1921 aa).

In terms of domain architecture, CARD spans 1-90; sequence MEPQRRELLA…HLLPILYLNG (90 aa). Positions 116 to 143 are disordered; sequence ESSSSLSSVGTTGKAPSPPPLLTEQQAN. The stretch at 139-601 forms a coiled coil; that stretch reads EQQANDTVEN…KEARFRQLMA (463 aa). 2 positions are modified to phosphoserine: serine 264 and serine 295. PDZ domains follow at residues 620-710 and 705-796; these read VVEF…RRRK and VVRR…LKVF. Residues 857-898 are disordered; sequence ELGHSGGSSSFLHKPFSGSSSPVSPQACPSTSERSLNSFRSD. The span at 873 to 898 shows a compositional bias: polar residues; that stretch reads SGSSSPVSPQACPSTSERSLNSFRSD. Phosphoserine is present on serine 900. Residues 930-1121 form a disordered region; that stretch reads EVPLDKIDPE…RPKSAPSFRP (192 aa). Threonine 984 carries the post-translational modification Phosphothreonine. Position 1000 is a phosphoserine (serine 1000). Position 1011 is a phosphothreonine (threonine 1011). Positions 1017-1030 are enriched in basic and acidic residues; sequence RRSDSIKFQHRLET. At serine 1021 the chain carries Phosphoserine. A compositionally biased stretch (pro residues) spans 1045–1055; sequence TSPPSAPPPSM. Threonine 1183 carries the post-translational modification Phosphothreonine. Disordered regions lie at residues 1204-1227, 1243-1266, and 1280-1343; these read VLPC…SVQH, YSEM…SSSN, and PRYP…KDRP. A Phosphoserine modification is found at serine 1209. Over residues 1217–1227 the composition is skewed to polar residues; that stretch reads GSQSLSPSVQH. The span at 1252 to 1266 shows a compositional bias: low complexity; that stretch reads SNSLPSSARLGSSSN. Position 1263 is a phosphoserine (serine 1263). The span at 1292 to 1324 shows a compositional bias: polar residues; sequence GSLSHSECSTPPRSPLNIDTLSSCSQPQTTAST. Serine 1334 bears the Phosphoserine mark. One can recognise a PDZ 3 domain in the interval 1350 to 1429; sequence HVKVQKGSEP…TITILAQYNP (80 aa). 3 stretches are compositionally biased toward polar residues: residues 1434-1443, 1450-1460, and 1483-1495; these read LNSHSRSSSH, PHSTLQGSSAG, and AKQS…SVGD. Positions 1434-1501 are disordered; it reads LNSHSRSSSH…SVGDTTKKTP (68 aa). Residues 1504-1585 enclose the PDZ 4 domain; that stretch reads RIVFIKKSQL…SLRLKVQYRH (82 aa). The region spanning 1596 to 1664 is the SH3 domain; it reads GDSFYIRALY…PSKYVMDQEF (69 aa). Serine 1669 is subject to Phosphoserine. One can recognise a Guanylate kinase-like domain in the interval 1724-1907; the sequence is DSVSLAYQRV…ICTQILAMVS (184 aa).

This sequence belongs to the MAGUK family. Interacts with MPP1. Interacts with CTNNB1 and with the third SH3 domain of SORBS3 to form a ternary complex. Interacts (via coiled-coil domain) with MARK3. Interacts (via PDZ domain 3) with STK3/MST2 and STK4/MST1. Interacts with SCRIB. Interacts with CTNB1. Interacts with SMO and (via PDZ4 or guanylate kinase-like domain) with KIF7. As to expression, brain (at protein level).

It localises to the cell junction. The protein localises to the cell membrane. The protein resides in the postsynaptic density. It is found in the cytoplasm. Its subcellular location is the cytoskeleton. It localises to the cilium basal body. Its function is as follows. Acts as a regulator of the Hippo signaling pathway. Negatively regulates the Hippo signaling pathway by mediating the interaction of MARK3 with STK3/4, bringing them together to promote MARK3-dependent hyperphosphorylation and inactivation of STK3 kinase activity toward LATS1. Positively regulates the Hippo signaling by mediating the interaction of SCRIB with STK4/MST1 and LATS1 which is important for the activation of the Hippo signaling pathway. Involved in regulating cell proliferation, maintenance of epithelial polarity, epithelial-mesenchymal transition (EMT), cell migration and invasion. Plays an important role in dendritic spine formation and synaptogenesis in cortical neurons; regulates synaptogenesis by enhancing the cell surface localization of N-cadherin. Acts as a positive regulator of hedgehog (Hh) signaling pathway. Plays a critical role in the early point of the SMO activity cycle by interacting with SMO at the ciliary base to induce the accumulation of KIF7 and GLI2 at the ciliary tip for GLI2 activation. The sequence is that of Disks large homolog 5 (Dlg5) from Mus musculus (Mouse).